We begin with the raw amino-acid sequence, 345 residues long: Protein-glutamate methylesterase/protein-glutamine glutaminase 2 (345 aa).

In terms of domain architecture, Response regulatory spans 1 to 116 (MVVDDSAVVR…KQFLVDASDD (116 aa)). Asp-50 is subject to 4-aspartylphosphate. Residues 154-345 (LQTTERVVAL…AREIMAQMAG (192 aa)) enclose the CheB-type methylesterase domain. Residues Ser-166, His-192, and Asp-288 contribute to the active site.

The protein belongs to the CheB family. In terms of processing, phosphorylated by CheA. Phosphorylation of the N-terminal regulatory domain activates the methylesterase activity.

The protein resides in the cytoplasm. The catalysed reaction is [protein]-L-glutamate 5-O-methyl ester + H2O = L-glutamyl-[protein] + methanol + H(+). It carries out the reaction L-glutaminyl-[protein] + H2O = L-glutamyl-[protein] + NH4(+). Involved in chemotaxis. Part of a chemotaxis signal transduction system that modulates chemotaxis in response to various stimuli. Catalyzes the demethylation of specific methylglutamate residues introduced into the chemoreceptors (methyl-accepting chemotaxis proteins or MCP) by CheR. Also mediates the irreversible deamidation of specific glutamine residues to glutamic acid. The sequence is that of Protein-glutamate methylesterase/protein-glutamine glutaminase 2 from Albidiferax ferrireducens (strain ATCC BAA-621 / DSM 15236 / T118) (Rhodoferax ferrireducens).